Reading from the N-terminus, the 238-residue chain is 2-C-methyl-D-erythritol 4-phosphate cytidylyltransferase (238 aa).

It belongs to the IspD/TarI cytidylyltransferase family. IspD subfamily.

It catalyses the reaction 2-C-methyl-D-erythritol 4-phosphate + CTP + H(+) = 4-CDP-2-C-methyl-D-erythritol + diphosphate. It functions in the pathway isoprenoid biosynthesis; isopentenyl diphosphate biosynthesis via DXP pathway; isopentenyl diphosphate from 1-deoxy-D-xylulose 5-phosphate: step 2/6. In terms of biological role, catalyzes the formation of 4-diphosphocytidyl-2-C-methyl-D-erythritol from CTP and 2-C-methyl-D-erythritol 4-phosphate (MEP). The chain is 2-C-methyl-D-erythritol 4-phosphate cytidylyltransferase from Pelotomaculum thermopropionicum (strain DSM 13744 / JCM 10971 / SI).